Here is a 281-residue protein sequence, read N- to C-terminus: Putative phosphatase/phosphodiesterase MPN_349 (281 aa).

Residues D12, E43, N44, and N71 each contribute to the Fe cation site. The Proton donor role is filled by H72. 3 residues coordinate Fe cation: H158, H183, and H185.

This sequence belongs to the YmdB-like family. Fe(3+) is required as a cofactor.

This is Putative phosphatase/phosphodiesterase MPN_349 from Mycoplasma pneumoniae (strain ATCC 29342 / M129 / Subtype 1) (Mycoplasmoides pneumoniae).